The following is a 297-amino-acid chain: uncharacterized protein (297 aa).

7 helical membrane passes run 14 to 34, 55 to 75, 81 to 101, 110 to 130, 135 to 155, 163 to 183, and 208 to 228; these read LFLMFIGTVSFLFIFIPFLKF, LLLGPIYGFFAVMLVTLIYFF, FYFGIYSLIPPTLAVISAGAL, AIILIVGLLLFYLTDVGRVAF, LSTLALLLILIFREKISKLLF, IVGATILSFSSVMTDHLYGSI, and LIMTVIGAFFVIFAIEISKCF.

It localises to the cell membrane. This is an uncharacterized protein from Methanocaldococcus jannaschii (strain ATCC 43067 / DSM 2661 / JAL-1 / JCM 10045 / NBRC 100440) (Methanococcus jannaschii).